The chain runs to 128 residues: Lymphocyte antigen 6D (128 aa).

The first 20 residues, 1–20 (MRTALLLLAALAVATGPALT), serve as a signal peptide directing secretion. The UPAR/Ly6 domain occupies 21–108 (LRCHVCTSSS…AAPTRTALAH (88 aa)). 5 cysteine pairs are disulfide-bonded: C23-C45, C26-C32, C38-C63, C67-C86, and C87-C92. N98 carries GPI-anchor amidated asparagine lipidation. Positions 99–128 (AAPTRTALAHSALSLGLALSLLAVILAPSL) are cleaved as a propeptide — removed in mature form.

In terms of tissue distribution, expressed exclusively at the outer cell surface of transitional epithelia and the keratinocyte of stratified squamous epithelia.

It localises to the cell membrane. Its function is as follows. May act as a specification marker at earliest stage specification of lymphocytes between B- and T-cell development. Marks the earliest stage of B-cell specification. This Homo sapiens (Human) protein is Lymphocyte antigen 6D (LY6D).